The following is a 920-amino-acid chain: Translation initiation factor IF-2 (920 aa).

The segment at 33–305 (KSASSTVEAP…RGRKSKRAKR (273 aa)) is disordered. The segment covering 53–86 (SKSAPAPAKSAGNGATAAPATSATPATAAAAAAP) has biased composition (low complexity). Pro residues-rich tracts occupy residues 87–159 (APAP…PAPR), 179–193 (PRPQPRPGAPRPGTP), and 201–212 (NMPPRPAGPRPG). The segment covering 225-291 (PGGRGPGGGG…GAAGAFGRPG (67 aa)) has biased composition (gly residues). A compositionally biased stretch (basic residues) spans 295 to 304 (KRGRKSKRAK). Positions 416 to 588 (IRPPVVTVMG…VLLTADASLD (173 aa)) constitute a tr-type G domain. The interval 425 to 432 (GHVDHGKT) is G1. 425–432 (GHVDHGKT) lines the GTP pocket. Positions 450-454 (GITQH) are G2. Residues 475–478 (DTPG) form a G3 region. Residues 475-479 (DTPGH) and 529-532 (NKID) contribute to the GTP site. The tract at residues 529–532 (NKID) is G4. Residues 565–567 (SAK) are G5.

Belongs to the TRAFAC class translation factor GTPase superfamily. Classic translation factor GTPase family. IF-2 subfamily.

The protein resides in the cytoplasm. One of the essential components for the initiation of protein synthesis. Protects formylmethionyl-tRNA from spontaneous hydrolysis and promotes its binding to the 30S ribosomal subunits. Also involved in the hydrolysis of GTP during the formation of the 70S ribosomal complex. The polypeptide is Translation initiation factor IF-2 (Mycobacterium sp. (strain JLS)).